The following is a 334-amino-acid chain: Fructose-1,6-bisphosphatase class 1 (334 aa).

The Mg(2+) site is built by Glu-90, Asp-113, Leu-115, and Asp-116. Substrate is bound by residues 116–119, Asn-209, Tyr-242, and Lys-272; that span reads DGSS. Glu-278 lines the Mg(2+) pocket.

Belongs to the FBPase class 1 family. Homotetramer. Requires Mg(2+) as cofactor.

Its subcellular location is the cytoplasm. It carries out the reaction beta-D-fructose 1,6-bisphosphate + H2O = beta-D-fructose 6-phosphate + phosphate. It functions in the pathway carbohydrate biosynthesis; gluconeogenesis. In Actinobacillus succinogenes (strain ATCC 55618 / DSM 22257 / CCUG 43843 / 130Z), this protein is Fructose-1,6-bisphosphatase class 1.